The chain runs to 308 residues: Vacuolar lysine transporter YPQ1 (308 aa).

Over 1 to 12 (MQLVPLELNRST) the chain is Vacuolar. Asn9 carries an N-linked (GlcNAc...) asparagine glycan. The 67-residue stretch at 10–76 (RSTLSGISGS…QHLLSTMIIL (67 aa)) folds into the PQ-loop 1 domain. Residues 13 to 33 (LSGISGSISISCWIIVFVPQI) form a helical membrane-spanning segment. Topologically, residues 34 to 44 (YENFYRKSSDG) are cytoplasmic. Residues 45-65 (LSLLFVVLWLAGDVFNLMGAV) form a helical membrane-spanning segment. Residues 66 to 68 (MQH) lie on the Vacuolar side of the membrane. The helical transmembrane segment at 69–89 (LLSTMIILAAYYTVADIILLG) threads the bilayer. Over 90 to 167 (QCLWYDNEEK…EVNSRNLIKD (78 aa)) the chain is Cytoplasmic. Residues 168–188 (IFIVSGVVFVGFISWYVTYCV) traverse the membrane as a helical segment. A glycan (N-linked (GlcNAc...) asparagine) is linked at Asn189. At 189–205 (NYTQPPPVEDPSLPVPE) the chain is on the vacuolar side. Residues 206–226 (LQINWMAQIFGYLSALLYLGS) form a helical membrane-spanning segment. Residues 211–274 (MAQIFGYLSA…ISLDWKYLIM (64 aa)) enclose the PQ-loop 2 domain. At 227-244 (RIPQILLNFKRKSCEGIS) the chain is on the cytoplasmic side. Residues 245-265 (FLFFLFACLGNTTFIFSVIVI) traverse the membrane as a helical segment. Residues 266 to 277 (SLDWKYLIMNAS) are Vacuolar-facing. Asn275 carries an N-linked (GlcNAc...) asparagine glycan. The chain crosses the membrane as a helical span at residues 278 to 298 (WLVGSIGTLFMDFVIFSQFFI). The Cytoplasmic segment spans residues 299–308 (YKRNKKFILN).

Belongs to the laat-1 family.

The protein resides in the vacuole membrane. Its function is as follows. Amino acid transporter that moves lysine into the vacuole. May also contribute to low affinity arginine import into the vacuole. Has also been suggested to mediate export of cationic amino acids from the vacuole. May function as an amino acid/proton antiporter. In Saccharomyces cerevisiae (strain ATCC 204508 / S288c) (Baker's yeast), this protein is Vacuolar lysine transporter YPQ1 (YPQ1).